We begin with the raw amino-acid sequence, 531 residues long: Peptide chain release factor 3 (531 aa).

The tr-type G domain occupies 10–278 (ARRRTFAIIS…DFVEHAPGPL (269 aa)). Residues 19–26 (SHPDAGKT), 87–91 (DTPGH), and 141–144 (NKLD) each bind GTP.

It belongs to the TRAFAC class translation factor GTPase superfamily. Classic translation factor GTPase family. PrfC subfamily.

The protein resides in the cytoplasm. Functionally, increases the formation of ribosomal termination complexes and stimulates activities of RF-1 and RF-2. It binds guanine nucleotides and has strong preference for UGA stop codons. It may interact directly with the ribosome. The stimulation of RF-1 and RF-2 is significantly reduced by GTP and GDP, but not by GMP. This chain is Peptide chain release factor 3, found in Thioalkalivibrio sulfidiphilus (strain HL-EbGR7).